Consider the following 63-residue polypeptide: MSVFLIVLSCITLAFASGAVYYIKLLSQAASYPPKRVIRQKALVCSTGTAFTLCLIFFTKLLA.

Helical transmembrane passes span 3–23 (VFLI…VYYI) and 42–62 (ALVC…TKLL).

It localises to the cell membrane. This is an uncharacterized protein from Bacillus subtilis (strain 168).